We begin with the raw amino-acid sequence, 146 residues long: Phospholipase A2 (146 aa).

The N-terminal stretch at 1–18 (MAFLVFAFLTLMAVETYG) is a signal peptide. Intrachain disulfides connect Cys44-Cys137, Cys46-Cys62, Cys61-Cys117, Cys67-Cys144, Cys68-Cys110, Cys77-Cys103, and Cys95-Cys108. Tyr45, Gly47, and Gly49 together coordinate Ca(2+). His65 is an active-site residue. Residue Asp66 coordinates Ca(2+). Asn85 carries an N-linked (GlcNAc...) asparagine glycan. The active site involves Asp111. Asn126 carries an N-linked (GlcNAc...) asparagine glycan.

It depends on Ca(2+) as a cofactor. Post-translationally, N-glycosylated. Glycosylated with mannose chains including Man2(GlcNAc), Man2(GlcNAc)2, Man2(GlcNAc)3, Man2(GlcNAc)4 and Man2(GlcNAc)5. As to expression, expressed by the skin glands (at protein level).

The protein resides in the secreted. The enzyme catalyses a 1,2-diacyl-sn-glycero-3-phosphocholine + H2O = a 1-acyl-sn-glycero-3-phosphocholine + a fatty acid + H(+). PLA2 catalyzes the calcium-dependent hydrolysis of the 2-acyl groups in 3-sn-phosphoglycerides. This is Phospholipase A2 from Pithecopus azureus (Orange-legged monkey tree frog).